The chain runs to 68 residues: Venom peptide 3 (68 aa).

Positions 1 to 25 (MTKQSIVIVLFAAIAMMACLQRVTA) are cleaved as a signal peptide. 5 AXPX repeats span residues 25 to 28 (AEPA), 33 to 36 (AAPI), 37 to 40 (AEPY), 41 to 44 (ANPE), and 47 to 50 (ASPE). A propeptide spanning residues 26–51 (EPAPEPIAAPIAEPYANPEAIASPEA) is cleaved from the precursor. At leucine 65 the chain carries Leucine amide.

As to expression, expressed by the venom gland.

Its subcellular location is the secreted. It is found in the target cell membrane. In terms of biological role, antimicrobial peptide with strong activity against the fungi B.cinerea (MIC=5 uM) and C.albicans (MIC=33 uM), and no activity against the Gram-negative bacterium E.coli (MIC&gt;200 uM) and the Gram-positive bacterium S.aureus (MIC&gt;200 uM). Shows cytolytic activity against insect cell lines. Has no hemolytic activity against human erythrocytes. In vivo, peptide injection in the vicinity of the head and thorax of lepidopteran larvae induces feeding disorder that lasts one or two days before recovering. This is Venom peptide 3 from Orancistrocerus drewseni (Solitary wasp).